The following is a 70-amino-acid chain: Small, acid-soluble spore protein I (70 aa).

The protein belongs to the SspI family.

It is found in the spore core. The polypeptide is Small, acid-soluble spore protein I (Bacillus licheniformis (strain ATCC 14580 / DSM 13 / JCM 2505 / CCUG 7422 / NBRC 12200 / NCIMB 9375 / NCTC 10341 / NRRL NRS-1264 / Gibson 46)).